The sequence spans 132 residues: Small ribosomal subunit protein bS16 (132 aa).

A compositionally biased stretch (basic and acidic residues) spans 82–107; the sequence is DSKVQSKKEHNANKVKKEVKKPEAKK. The tract at residues 82-132 is disordered; the sequence is DSKVQSKKEHNANKVKKEVKKPEAKKAAASKPASKPSASKSASQKKTVSKK. Positions 108–132 are enriched in low complexity; that stretch reads AAASKPASKPSASKSASQKKTVSKK.

The protein belongs to the bacterial ribosomal protein bS16 family.

This is Small ribosomal subunit protein bS16 from Malacoplasma penetrans (strain HF-2) (Mycoplasma penetrans).